The chain runs to 984 residues: Pro-apoptotic serine protease NMA111 (984 aa).

Residues 51-241 (VVSIQFAQVA…LPLNRGKRAL (191 aa)) form a serine protease region. Catalysis depends on charge relay system residues H89, D120, and S203. 2 consecutive PDZ domains span residues 268–346 (RRLG…ERNG) and 756–826 (PEWI…VRNK).

It belongs to the peptidase S1C family.

It is found in the nucleus. Nuclear serine protease which mediates apoptosis. This is Pro-apoptotic serine protease NMA111 (NMA111) from Yarrowia lipolytica (strain CLIB 122 / E 150) (Yeast).